A 486-amino-acid polypeptide reads, in one-letter code: MTAISNHVGTIVKLNPDYTQMDAVYLTNKLLNLIGDAALDLPGDADPLTNLDLMVKAAQENGKIPDSQAARQILEAQLMDLATPTPSRINQLFWDKYQAGPRVATDWFFALSRANNYIQTRAIAKNVVFPAKTEYGDLEITINLSKPEKDPKDIAAAAHAAQSGYPACALCLQTEGYAGRTDFAARTNHRIIRFLLGGKTWGFQYSPYAYFNEHAIFLDAIHEPMVIDQSTFSNLLSIVSMFPTYFVGSNADLPIVGGSMLTHEHYQGGRHTFPMAKAPIETQVEISGHPHVFAGIVKWPMSVIRLVSADSDELINAAEHVRQVWNQYTDETVDVRAFVDGKPHHTVTPIARRVGSEFQLDLVLRDNQTSAEHPDGIFHPHQDVQHIKKENIGLIEVMGRAILPARLKSELAEVQKYLLGEANTMKPMHKTWADQLKAKYDWTPENVEAQMQAAVGRVFARVLEDAGVFKRDEVGQKAFARFCRAL.

This sequence belongs to the galactose-1-phosphate uridylyltransferase type 2 family.

It localises to the cytoplasm. The catalysed reaction is alpha-D-galactose 1-phosphate + UDP-alpha-D-glucose = alpha-D-glucose 1-phosphate + UDP-alpha-D-galactose. It participates in carbohydrate metabolism; galactose metabolism. The protein is Galactose-1-phosphate uridylyltransferase of Lacticaseibacillus casei (Lactobacillus casei).